The chain runs to 240 residues: MFLVGLTGGIASGKSSVIQVFQQLGCAVIDVDVIARHIVQPGCPAHRRIVEAFGTEVLLENGDINRKVLGDLIFNQPDRRQLLNSITHPEIRKEMMKETFKYFLRGYRYVILDIPLLFETKKLLKYMKHTVVVYCDRDTQLARLMKRNNLNREDAEARINSQLPLKDKARMANHVLDNSGEWSLTRRQVILLHAKLERSMEYLPLRLGFLTGLAGIASLLYLLTRYLLPSPQLGNPGSKP.

The DPCK domain maps to 3–207 (LVGLTGGIAS…RSMEYLPLRL (205 aa)). Position 8 to 15 (8 to 15 (GGIASGKS)) interacts with ATP.

This sequence belongs to the CoaE family.

This chain is Dephospho-CoA kinase domain-containing protein (Dcakd), found in Rattus norvegicus (Rat).